The sequence spans 1486 residues: Chromosome partition protein MukB (1486 aa).

Position 34–41 (34–41) interacts with ATP; it reads GGNGAGKS. Coiled coils occupy residues 326–418, 444–480, and 509–603; these read LEAD…QYNQ, LETF…QAYQ, and RHLA…RAPV. The tract at residues 666-783 is flexible hinge; it reads PGGSEDQRLN…EVPLFGRAAR (118 aa). Coiled-coil stretches lie at residues 835–923, 977–1115, and 1209–1266; these read EAEI…AKLE, EMLS…TAKA, and VEAI…QNVS.

It belongs to the SMC family. MukB subfamily. Homodimerization via its hinge domain. Binds to DNA via its C-terminal region. Interacts, and probably forms a ternary complex, with MukE and MukF via its C-terminal region. The complex formation is stimulated by calcium or magnesium. Interacts with tubulin-related protein FtsZ.

The protein resides in the cytoplasm. It is found in the nucleoid. Functionally, plays a central role in chromosome condensation, segregation and cell cycle progression. Functions as a homodimer, which is essential for chromosome partition. Involved in negative DNA supercoiling in vivo, and by this means organize and compact chromosomes. May achieve or facilitate chromosome segregation by condensation DNA from both sides of a centrally located replisome during cell division. This Escherichia coli O157:H7 protein is Chromosome partition protein MukB.